Reading from the N-terminus, the 229-residue chain is Orotidine 5'-phosphate decarboxylase (229 aa).

Substrate is bound by residues aspartate 11, lysine 33, 61 to 70 (DMKLFDISAT), threonine 116, arginine 179, glutamine 188, glycine 208, and arginine 209. The active-site Proton donor is lysine 63.

It belongs to the OMP decarboxylase family. Type 1 subfamily. Homodimer.

It carries out the reaction orotidine 5'-phosphate + H(+) = UMP + CO2. It participates in pyrimidine metabolism; UMP biosynthesis via de novo pathway; UMP from orotate: step 2/2. Its function is as follows. Catalyzes the decarboxylation of orotidine 5'-monophosphate (OMP) to uridine 5'-monophosphate (UMP). This chain is Orotidine 5'-phosphate decarboxylase, found in Jannaschia sp. (strain CCS1).